The chain runs to 963 residues: Adhesion G protein-coupled receptor D2 (963 aa).

Topologically, residues 1–662 (MDAPWGAGER…EEESLLRTLS (662 aa)) are extracellular. The disordered stretch occupies residues 18 to 38 (DRSGVSLGPPPTPQVNQGTLG). Residues 116–325 (TTAVLVFDER…LPTVWVRLLC (210 aa)) enclose the Pentraxin (PTX) domain. A disulfide bridge connects residues Cys146 and Cys212. Asn271 carries N-linked (GlcNAc...) asparagine glycosylation. One can recognise a GAIN-B domain in the interval 489–649 (MALVASVQRL…AILLQIYEVQ (161 aa)). The GPS stretch occupies residues 599–649 (PLFPPHPPSPYTGGAWATTGCSVAALYLDSTACFCNHSTSFAILLQIYEVQ). Cys619 and Cys633 form a disulfide bridge. Asn634 carries an N-linked (GlcNAc...) asparagine glycan. A helical membrane pass occupies residues 663 to 683 (FVGCGVSFCALTTTFLLFLVA). At 684-691 (GVPKSERT) the chain is on the cytoplasmic side. The helical transmembrane segment at 692 to 712 (TVHKNLTFSLASAEGFLMTSE) threads the bilayer. At 713–720 (WAKANEVA) the chain is on the extracellular side. The chain crosses the membrane as a helical span at residues 721-741 (CVAVTVAMHFLFLVAFSWMLV). The Cytoplasmic portion of the chain corresponds to 742 to 762 (EGLLLWRKVVAVSMHPGPGMR). Residues 763–783 (LYHATGWGVPVGIVAVTLAML) form a helical membrane-spanning segment. Over 784-800 (PHDYVAPGHCWLNVHTN) the chain is Extracellular. The chain crosses the membrane as a helical span at residues 801-821 (AIWAFVGPVLFVLTANTCILA). Residues 822–857 (RVVMITVSSARRRARMLSPQPCLQQQIWTQIWATVK) are Cytoplasmic-facing. The helical transmembrane segment at 858–878 (PVLVLLPVLGLTWLAGILVHL) threads the bilayer. Over 879 to 880 (SP) the chain is Extracellular. Residues 881–901 (AWAYAAVGLNSIQGLYIFLVY) traverse the membrane as a helical segment. Residues 902-963 (AACNEEVRSA…TPRHPLKAPA (62 aa)) are Cytoplasmic-facing.

It belongs to the G-protein coupled receptor 2 family. Adhesion G-protein coupled receptor (ADGR) subfamily.

It is found in the membrane. Functionally, orphan receptor. The polypeptide is Adhesion G protein-coupled receptor D2 (ADGRD2) (Homo sapiens (Human)).